A 1315-amino-acid chain; its full sequence is Probable nucleoporin C890.06 (1315 aa).

It belongs to the non-repetitive/WGA-negative nucleoporin family.

The protein resides in the cytoplasm. The protein localises to the nucleus. The protein is Probable nucleoporin C890.06 of Schizosaccharomyces pombe (strain 972 / ATCC 24843) (Fission yeast).